A 253-amino-acid chain; its full sequence is E3 ubiquitin-protein ligase MARCHF3 (253 aa).

The RING-CH-type zinc-finger motif lies at 63–123; sequence SPFNDRPMCR…ELCHFRFAVE (61 aa). Zn(2+) contacts are provided by Cys71, Cys74, Cys87, Cys89, His97, Cys100, Cys113, and Cys116. Helical transmembrane passes span 145 to 165 and 182 to 202; these read LFGD…SGWL and AVGL…WTLV. Phosphoserine is present on residues Ser237 and Ser243.

Interacts with MARCHF2 and STX6. Expressed predominantly in lung, colon and spleen. Present in liver (at protein level).

It is found in the cytoplasmic vesicle membrane. It localises to the early endosome membrane. It carries out the reaction S-ubiquitinyl-[E2 ubiquitin-conjugating enzyme]-L-cysteine + [acceptor protein]-L-lysine = [E2 ubiquitin-conjugating enzyme]-L-cysteine + N(6)-ubiquitinyl-[acceptor protein]-L-lysine.. Its pathway is protein modification; protein ubiquitination. E3 ubiquitin-protein ligase which may be involved in endosomal trafficking. E3 ubiquitin ligases accept ubiquitin from an E2 ubiquitin-conjugating enzyme in the form of a thioester and then directly transfer the ubiquitin to targeted substrates. This chain is E3 ubiquitin-protein ligase MARCHF3 (Marchf3), found in Rattus norvegicus (Rat).